The following is a 287-amino-acid chain: Isopentenyl-diphosphate Delta-isomerase I (287 aa).

The Nudix hydrolase domain occupies 105 to 257 (LLHRAFSVFL…GVKLSPWFRL (153 aa)). Catalysis depends on residues Cys142 and Tyr207.

This sequence belongs to the IPP isomerase type 1 family.

The enzyme catalyses isopentenyl diphosphate = dimethylallyl diphosphate. The protein operates within isoprenoid biosynthesis; dimethylallyl diphosphate biosynthesis; dimethylallyl diphosphate from isopentenyl diphosphate: step 1/1. It participates in porphyrin-containing compound metabolism; chlorophyll biosynthesis. Catalyzes the 1,3-allylic rearrangement of the homoallylic substrate isopentenyl (IPP) to its highly electrophilic allylic isomer, dimethylallyl diphosphate (DMAPP). The sequence is that of Isopentenyl-diphosphate Delta-isomerase I (IPI1) from Clarkia breweri (Fairy fans).